The following is a 397-amino-acid chain: Mannonate dehydratase (397 aa).

The protein belongs to the mannonate dehydratase family. The cofactor is Fe(2+). It depends on Mn(2+) as a cofactor.

The enzyme catalyses D-mannonate = 2-dehydro-3-deoxy-D-gluconate + H2O. Its pathway is carbohydrate metabolism; pentose and glucuronate interconversion. Its function is as follows. Catalyzes the dehydration of D-mannonate. The chain is Mannonate dehydratase from Yersinia pseudotuberculosis serotype O:1b (strain IP 31758).